A 355-amino-acid polypeptide reads, in one-letter code: Cobalt-precorrin-5B C(1)-methyltransferase (355 aa).

Belongs to the CbiD family.

The catalysed reaction is Co-precorrin-5B + S-adenosyl-L-methionine = Co-precorrin-6A + S-adenosyl-L-homocysteine. It participates in cofactor biosynthesis; adenosylcobalamin biosynthesis; cob(II)yrinate a,c-diamide from sirohydrochlorin (anaerobic route): step 6/10. Its function is as follows. Catalyzes the methylation of C-1 in cobalt-precorrin-5B to form cobalt-precorrin-6A. This chain is Cobalt-precorrin-5B C(1)-methyltransferase, found in Parasynechococcus marenigrum (strain WH8102).